Reading from the N-terminus, the 69-residue chain is MLKQSGHKHGKLLKILKHNKPKERKFGKGARRCERCGRYDGIIRRYGLYLCKDCFKEVAHELGFFKWGE.

Zn(2+) contacts are provided by C33, C36, C51, and C54.

The protein belongs to the universal ribosomal protein uS14 family. Zinc-binding uS14 subfamily. In terms of assembly, part of the 30S ribosomal subunit. Zn(2+) is required as a cofactor.

Binds 16S rRNA, required for the assembly of 30S particles. This Nanoarchaeum equitans (strain Kin4-M) protein is Small ribosomal subunit protein uS14.